The primary structure comprises 820 residues: MEQARYSNQQSVNPQQKGFGGPGLQDLPKQDPMQNTMEWQHHGYGMDSGFQSSATSHPPSVSSKSRHEDGGEEAQAQGMFEWDAGYGQAYTQEQVDEMNQQLTQTRSQRVRAAMFPETLEEGVQIPSTQFDPAHPTAVQRLSEPSQMLKHAVVNLINYQDDADLATRAIPELTKLLNDDDLVVVNQAAMMVHQLSKKEASRHAIMNSPQMVAALVRAMSNSNDAETTRCAAGTLHNLSHHRAGLLQIFKSGGIPALIKLLSSPVESVLFYAITTLHNLLLHQEGSKMAVRLAGGLQKMVALLSRNNPKFLAITTDCLQILAYGNQESKLIILASGGPAALVHIMRTYDYEKLLWTTSRVLKVLSVCHNNKPAIVEAGGMSALGLHLGHHSNRLVQNCLWTLRNLSDCHRGTDDIEPLLQMLVQLLASNDINVVTCACGILSNLTCNNSRNKMIVSQMAGVEALVQTLMKAGDREEITEPAVCALRHVTSRHPGAEMGQNTVRLNYGIPVIVKLLHPPSRWPLIKATVGLIRNLALCSANHAPLREQGALHRLVQLLMRAHQDTQRRSSMGSTGSQGGNYADGVRMEDIVEGTTGALHILARDSHNRALIQGLNCIPLFVQLLYNNIENIQRVAAGVLSELSLEKQGAEMIEQEGATAPLTELLHSRNEGVATYAAAVLYRMSDDKPQDYKKRISVELGNSLFRGDSVPWGDPLDMPSDNQILPPSSMGGHPPDPGYPQPGSVHSLHSNHGEYRQPPPPMQGYHDGTGPIEPMMQDLDLGGGGDFGMDPGLPDMGPPASDLNLDSIPPADNTGLAFFDTDL.

The span at 1 to 16 (MEQARYSNQQSVNPQQ) shows a compositional bias: polar residues. The interval 1–74 (MEQARYSNQQ…SRHEDGGEEA (74 aa)) is disordered. Residues 52–63 (SSATSHPPSVSS) are compositionally biased toward low complexity. 10 ARM repeats span residues 157-196 (NYQD…QLSK), 199-239 (ASRH…NLSH), 241-280 (RAGL…NLLL), 283-322 (EGSK…ILAY), 367-405 (HNNK…RNLS), 406-445 (DCHR…NLTC), 448-489 (SRNK…HVTS), 495-535 (EMGQ…NLAL), 603-642 (SHNR…ELSL), and 644-683 (KQGA…RMSD). The disordered stretch occupies residues 708-811 (PWGDPLDMPS…LDSIPPADNT (104 aa)). The span at 785–796 (GMDPGLPDMGPP) shows a compositional bias: low complexity.

The protein belongs to the beta-catenin family.

The protein resides in the cytoplasm. It is found in the cytoskeleton. Its function is as follows. Binds to the cytoplasmic domain of the cell-cell adhesion molecule E-cadherin, and perhaps to other (membrane) proteins. The association of catenins to cadherins produces a complex which is linked to the actin filament network, and which seems to be of primary importance for cadherins cell-adhesion properties. In Tripneustes gratilla (Hawaian sea urchin), this protein is Catenin beta.